The primary structure comprises 271 residues: Co-chaperone protein DjlA (271 aa).

At 1–6 (MQYWGK) the chain is on the periplasmic side. A helical membrane pass occupies residues 7–31 (IIGVAVALLMGGGFWGVVLGLLIGH). Residues 32-271 (MFDKARSRKM…ELIKQQKGFK (240 aa)) are Cytoplasmic-facing. Residues 205–271 (DACNVLGVKP…ELIKQQKGFK (67 aa)) form the J domain.

Homodimer.

It localises to the cell inner membrane. Functionally, regulatory DnaK co-chaperone. Direct interaction between DnaK and DjlA is needed for the induction of the wcaABCDE operon, involved in the synthesis of a colanic acid polysaccharide capsule, possibly through activation of the RcsB/RcsC phosphotransfer signaling pathway. The colanic acid capsule may help the bacterium survive conditions outside the host. This chain is Co-chaperone protein DjlA, found in Escherichia coli (strain K12).